The primary structure comprises 305 residues: Ankyrin repeat domain-containing protein 23 (305 aa).

Residues 41 to 72 (QEAVAREKLKLEEEKKKKLERFNSTRFNLDNL) are a coiled coil. A compositionally biased stretch (basic residues) spans 83-92 (KKRLRHRVPP). Positions 83–104 (KKRLRHRVPPRKPEPLVKPQSQ) are disordered. ANK repeat units lie at residues 143–172 (LHRTALHWACLKGHSQLVNKLLVAGATVDA), 176–205 (LDRTPVFWACRGGHLVILKQLLNQGARVNA), 209–238 (IGSTPLHVAVRTRHPDCLEHLIECGAHLNA), and 242–271 (EGDTALHEAVRHGSYKAMKLLLLYGAELGV). An interaction with TTN region spans residues 178–195 (RTPVFWACRGGHLVILKQ).

As to quaternary structure, interacts with titin/TTN and MYPN. In terms of tissue distribution, mainly expressed in heart, skeletal muscle and brown adipose tissues.

The protein localises to the nucleus. Functionally, may be involved in the energy metabolism. Could be a molecular link between myofibrillar stretch-induced signaling pathways and muscle gene expression. The protein is Ankyrin repeat domain-containing protein 23 (ANKRD23) of Homo sapiens (Human).